A 218-amino-acid polypeptide reads, in one-letter code: Phosphatidylserine decarboxylase proenzyme (218 aa).

S182 (schiff-base intermediate with substrate; via pyruvic acid) is an active-site residue. S182 carries the pyruvic acid (Ser); by autocatalysis modification.

It belongs to the phosphatidylserine decarboxylase family. PSD-A subfamily. As to quaternary structure, heterodimer of a large membrane-associated beta subunit and a small pyruvoyl-containing alpha subunit. Requires pyruvate as cofactor. In terms of processing, is synthesized initially as an inactive proenzyme. Formation of the active enzyme involves a self-maturation process in which the active site pyruvoyl group is generated from an internal serine residue via an autocatalytic post-translational modification. Two non-identical subunits are generated from the proenzyme in this reaction, and the pyruvate is formed at the N-terminus of the alpha chain, which is derived from the carboxyl end of the proenzyme. The post-translation cleavage follows an unusual pathway, termed non-hydrolytic serinolysis, in which the side chain hydroxyl group of the serine supplies its oxygen atom to form the C-terminus of the beta chain, while the remainder of the serine residue undergoes an oxidative deamination to produce ammonia and the pyruvoyl prosthetic group on the alpha chain.

It is found in the cell membrane. It carries out the reaction a 1,2-diacyl-sn-glycero-3-phospho-L-serine + H(+) = a 1,2-diacyl-sn-glycero-3-phosphoethanolamine + CO2. It participates in phospholipid metabolism; phosphatidylethanolamine biosynthesis; phosphatidylethanolamine from CDP-diacylglycerol: step 2/2. Its function is as follows. Catalyzes the formation of phosphatidylethanolamine (PtdEtn) from phosphatidylserine (PtdSer). The sequence is that of Phosphatidylserine decarboxylase proenzyme from Oleidesulfovibrio alaskensis (strain ATCC BAA-1058 / DSM 17464 / G20) (Desulfovibrio alaskensis).